Here is a 1779-residue protein sequence, read N- to C-terminus: MAPEARASPRLLLRAALLLLAALLPVASSAGPPVDHPLKPRHVKLLSANMGLKVTWDPPKDATSRPVEHYNIAYGKSLKSLKSIKVNAETHSFLIKDVEKEVPNKPLRMRVRASDDRLSVAWKAPRLSGAKSPRRSRGFLLGYGESGRKMNYVPLTRDERSHEIKKLASESVYVVSLQSTNSQGQSQPVYRAALTKRKNAEEDELDVPEDISVRVMSSQSVLVAWVDPLVEKQKRVVASRQYTVRYREKGESARWDYKQVSNRRALVDSLIPDTVYEFAVRISQGERDGKWSASVFQRTPESAPTTAPENLRVWPVNGKPTVVTVSWDALPESEGKVKEYILSYAPALKPFGAKSLTFSGHTTSALVDGLQPGERYLFKIRATNRRGQGPHSKAFIVAIPTTSSTEASVQPNGRDNGKPEKPQQPSSSAPKVAASSQHMPPAKNVKDALSDLKNKIQTNGVAPGRTQLHSKVGELDPQSTEVTGEEELDSLENPRSSRLETLNQKQPLRVPSRSGHGALAPGRTPARAGLPVLSRKEGMDRRGPSLDPHPHPRVEPSASSAYHQLSSTDNDSVDRKEDDQAGSPDPKAASSGSSPKNPGRSRPTSAPSRHAASNMLRDKSRVHPGTKAASSSTSRQSHSSTSEEDSSAQPSRHFPLHRGSSTSPLSRGWKDRQDTHASSSHTTSRTASSSHPSALTEGSEEEDGGADSDRAAEDTIRRAEATAQIQQTRPGLGHFSLIRNKPFTPHSRNPNRFPRLRGPRLQPSVSPQSTSASKVLTRSPSLPASHTRPGSDVYGDGEDEEPLPATVINDRTPSYPRHPISGSSDTLRRGPQRGASLYRKEPIPENSKAAGADVPPGGRSPLSSKAQGFQQSTTDEGAPQTSPASTSRQPSPARPPASRSQPSPGSTVPRRMTPDRSSELSSSQSKDRSLSQPKLSVAHAGHDHPHTANSRGVLPSAPQNQNEGAQSTYEDNSTEIEGPDSRTPTHSARAKDTTPPILKPRQVGSQSWSSDNRPQPSQAGASERPIRPGSTHPRAQVPGRAGVQATSVKKVSPSKRPLPLESQQSVFAEEEEENEGMLKGKEDSLSTSVKKWPSSSSPRDKYADRNLDKDKAAIGLLVQEENTVPGRRPPGSPAIASHPSTRHQPRNPATASPIANTHSWPRYTTRAPSSYSSTTPMLSLRQRMQRRFRTPVSRQPPPPRPVLTPGYNGRPNAEENIPPGSIGKPNGQRIINGPQGTKWVVDLDRGLVLNAEGRYLQDSHGNPLRVRLGGDGRTIVDLGGTPMVSPDGLPLFGQGRHGKPVASAQDKPILSLGGKPLVGLEVVRTTTQVPTTTMPPSTTTTTVPPTTTLPPTTTTTRRTTTTRRTTTTRRPTTTTRATRRTTTTTTTPEPTTPSPTCPPGTLEHRDEAGNLIMGSNGIPECYPEEDDFSGLEIDTALPTEEDYVVYDDDYGLETTRPPTSTMPSTTAATPKVVPEQGTVSSFPEEEFDLAGKRRFVAPYVTYLSKDPAAPCSLTDALDHFQVESLDELIPNDLTKNDLPPQHAPRNITVVAMEGCHSFVIVDWNKAIPGDVVTGYLVYSASYEDFIRNKWSTQTSSVTHLPIENLKPNTRYYFKVQAKNPHGYGPVSPSVSFVTESDNPLLVVRPPGGEPIWIPFAFKHDPGYTDCHGRQYVKRTWYKKFVGVVLCNSLRYKIYLSDNLKDTFYSIGDSWGRGEDHCQFVDSHLDGRTGPQSYVEALPTIQGYYRQYRQEPVSFGHIGFGTPYYYVGWYECGVSIPGKW.

The N-terminal stretch at 1 to 29 (MAPEARASPRLLLRAALLLLAALLPVASS) is a signal peptide. Fibronectin type-III domains are found at residues 33–126 (PVDH…KAPR), 103–203 (PNKP…AEED), 207–302 (VPED…TPES), and 307–402 (APEN…IPTT). A compositionally biased stretch (polar residues) spans 400-413 (PTTSSTEASVQPNG). Disordered stretches follow at residues 400 to 442 (PTTS…MPPA), 459 to 1108 (NGVA…RNLD), 1120 to 1227 (EENT…KPNG), and 1330 to 1401 (PTTT…PPGT). A compositionally biased stretch (low complexity) spans 423–437 (QQPSSSAPKVAASSQ). Polar residues predominate over residues 493–506 (NPRSSRLETLNQKQ). A compositionally biased stretch (basic and acidic residues) spans 534–554 (SRKEGMDRRGPSLDPHPHPRV). Polar residues-rich tracts occupy residues 557 to 570 (SASS…STDN) and 590 to 607 (SSGS…TSAP). Positions 629–640 (ASSSTSRQSHSS) are enriched in low complexity. Ser-651 carries the phosphoserine modification. Low complexity predominate over residues 676–694 (HASSSHTTSRTASSSHPSA). Ser-699 carries the post-translational modification Phosphoserine. A compositionally biased stretch (basic and acidic residues) spans 707–720 (DSDRAAEDTIRRAE). Polar residues-rich tracts occupy residues 763–784 (PSVS…SLPA) and 861–875 (PLSS…STTD). The span at 879–904 (PQTSPASTSRQPSPARPPASRSQPSP) shows a compositional bias: low complexity. Polar residues-rich tracts occupy residues 957–971 (APQN…TYED) and 1003–1020 (VGSQ…SQAG). The span at 1085-1097 (LSTSVKKWPSSSS) shows a compositional bias: low complexity. Basic and acidic residues predominate over residues 1098 to 1108 (PRDKYADRNLD). Composition is skewed to polar residues over residues 1147–1159 (NPAT…NTHS) and 1166–1177 (RAPSSYSSTTPM). Positions 1330–1389 (PTTTMPPSTTTTTVPPTTTLPPTTTTTRRTTTTRRTTTTRRPTTTTRATRRTTTTTTTPE) are enriched in low complexity. The 95-residue stretch at 1543–1637 (APRNITVVAM…PSVSFVTESD (95 aa)) folds into the Fibronectin type-III 5 domain. Asn-1546 is a glycosylation site (N-linked (GlcNAc...) asparagine).

It is found in the secreted. Functionally, may be an activator of G protein signaling. The polypeptide is Fibronectin type III domain-containing protein 1 (Fndc1) (Rattus norvegicus (Rat)).